A 335-amino-acid polypeptide reads, in one-letter code: tRNA N6-adenosine threonylcarbamoyltransferase (335 aa).

The a divalent metal cation site is built by H109, H113, and Y130. Substrate contacts are provided by residues 130–134 (YVSGG), D162, G177, E181, and N266. D294 is a binding site for a divalent metal cation.

This sequence belongs to the KAE1 / TsaD family. Component of the EKC/KEOPS complex composed of at least GON7, TP53RK, TPRKB, OSGEP and LAGE3; the whole complex dimerizes. A divalent metal cation serves as cofactor.

Its subcellular location is the cytoplasm. It localises to the nucleus. The catalysed reaction is L-threonylcarbamoyladenylate + adenosine(37) in tRNA = N(6)-L-threonylcarbamoyladenosine(37) in tRNA + AMP + H(+). Component of the EKC/KEOPS complex that is required for the formation of a threonylcarbamoyl group on adenosine at position 37 (t(6)A37) in tRNAs that read codons beginning with adenine. The complex is probably involved in the transfer of the threonylcarbamoyl moiety of threonylcarbamoyl-AMP (TC-AMP) to the N6 group of A37. OSGEP likely plays a direct catalytic role in this reaction, but requires other protein(s) of the complex to fulfill this activity. The sequence is that of tRNA N6-adenosine threonylcarbamoyltransferase (Osgep) from Rattus norvegicus (Rat).